A 338-amino-acid chain; its full sequence is Holliday junction branch migration complex subunit RuvB (338 aa).

The tract at residues Met1 to Tyr184 is large ATPase domain (RuvB-L). Residues Leu23, Arg24, Gly65, Lys68, Thr69, Thr70, Glu131–Phe133, Arg174, Tyr184, and Arg221 each bind ATP. Thr69 is a Mg(2+) binding site. The small ATPAse domain (RuvB-S) stretch occupies residues Gln185–Gln255. The tract at residues His258–Asn338 is head domain (RuvB-H). Residues Arg313 and Arg318 each coordinate DNA.

The protein belongs to the RuvB family. As to quaternary structure, homohexamer. Forms an RuvA(8)-RuvB(12)-Holliday junction (HJ) complex. HJ DNA is sandwiched between 2 RuvA tetramers; dsDNA enters through RuvA and exits via RuvB. An RuvB hexamer assembles on each DNA strand where it exits the tetramer. Each RuvB hexamer is contacted by two RuvA subunits (via domain III) on 2 adjacent RuvB subunits; this complex drives branch migration. In the full resolvosome a probable DNA-RuvA(4)-RuvB(12)-RuvC(2) complex forms which resolves the HJ.

It localises to the cytoplasm. It catalyses the reaction ATP + H2O = ADP + phosphate + H(+). Its function is as follows. The RuvA-RuvB-RuvC complex processes Holliday junction (HJ) DNA during genetic recombination and DNA repair, while the RuvA-RuvB complex plays an important role in the rescue of blocked DNA replication forks via replication fork reversal (RFR). RuvA specifically binds to HJ cruciform DNA, conferring on it an open structure. The RuvB hexamer acts as an ATP-dependent pump, pulling dsDNA into and through the RuvAB complex. RuvB forms 2 homohexamers on either side of HJ DNA bound by 1 or 2 RuvA tetramers; 4 subunits per hexamer contact DNA at a time. Coordinated motions by a converter formed by DNA-disengaged RuvB subunits stimulates ATP hydrolysis and nucleotide exchange. Immobilization of the converter enables RuvB to convert the ATP-contained energy into a lever motion, pulling 2 nucleotides of DNA out of the RuvA tetramer per ATP hydrolyzed, thus driving DNA branch migration. The RuvB motors rotate together with the DNA substrate, which together with the progressing nucleotide cycle form the mechanistic basis for DNA recombination by continuous HJ branch migration. Branch migration allows RuvC to scan DNA until it finds its consensus sequence, where it cleaves and resolves cruciform DNA. In Enterococcus faecalis (strain ATCC 700802 / V583), this protein is Holliday junction branch migration complex subunit RuvB.